Reading from the N-terminus, the 506-residue chain is Cysteine protease 1 (506 aa).

Positions 1-21 (MTSSRPSGRDSTGWQETVSNT) are disordered. Cys-226 serves as the catalytic Nucleophile. Catalysis depends on residues Asp-399 and His-401.

It belongs to the peptidase C54 family.

It localises to the cytoplasm. It is found in the nucleus. The protein resides in the preautophagosomal structure. It carries out the reaction [protein]-C-terminal L-amino acid-glycyl-phosphatidylethanolamide + H2O = [protein]-C-terminal L-amino acid-glycine + a 1,2-diacyl-sn-glycero-3-phosphoethanolamine. Functionally, cysteine protease that plays a key role in cytoplasm to vacuole transport (Cvt) and autophagy by mediating both proteolytic activation and delipidation of ATG8. Required for selective autophagic degradation of the nucleus (nucleophagy) as well as for mitophagy which contributes to regulate mitochondrial quantity and quality by eliminating the mitochondria to a basal level to fulfill cellular energy requirements and preventing excess ROS production. The protease activity is required for proteolytic activation of ATG8: cleaves the C-terminal amino acid of ATG8 to reveal a C-terminal glycine. ATG8 ubiquitin-like activity requires the exposure of the glycine at the C-terminus for its conjugation to phosphatidylethanolamine (PE) and its insertion to membranes, which is necessary for autophagy. The ATG8-PE conjugate mediates tethering between adjacent membranes and stimulates membrane hemifusion, leading to expansion of the autophagosomal membrane during autophagy. In addition to the protease activity, also catalyzes deconjugation of PE-conjugated forms of ATG8 during macroautophagy: ATG8 delipidation is required to release the protein from membranes, which facilitates multiple events during macroautophagy, and especially for efficient autophagosome biogenesis, the assembly of ATG9-containing tubulovesicular clusters into phagophores/autophagosomes, and for the disassembly of PAS-associated ATG components. ATG8 delipidation by ATG4 also recycles ATG8-PE generated on inappropriate membranes to maintain a reservoir of unlipidated ATG8 that is required for autophagosome formation at the PAS. In Neurospora crassa (strain ATCC 24698 / 74-OR23-1A / CBS 708.71 / DSM 1257 / FGSC 987), this protein is Cysteine protease 1 (cpr-1).